Reading from the N-terminus, the 152-residue chain is Small ribosomal subunit protein bS6 (152 aa).

The interval 94 to 152 (VKQEGPLPTPKPSNKSSTQSENKDNPETKVESKEEQSVTNSDTSTTKKDDNEIKENTES) is disordered. 2 stretches are compositionally biased toward basic and acidic residues: residues 114–129 (ENKD…KEEQ) and 138–152 (TTKK…NTES).

The protein belongs to the bacterial ribosomal protein bS6 family.

Functionally, binds together with bS18 to 16S ribosomal RNA. This is Small ribosomal subunit protein bS6 from Prochlorococcus marinus (strain MIT 9312).